The sequence spans 1264 residues: Phosphatidylinositol 3,4,5-trisphosphate 5-phosphatase 2 (1264 aa).

The 97-residue stretch at 26–122 (WYHRDLSRAA…GLVCALLLPV (97 aa)) folds into the SH2 domain. The segment covering 124-137 (REREPDPPDDRDVS) has biased composition (basic and acidic residues). A disordered region spans residues 124–182 (REREPDPPDDRDVSDGEDEKPPLPPRSGSTSISAPVGPGSPPAAPETPTTPAAESAPNG). Serine 137 carries the post-translational modification Phosphoserine. Low complexity predominate over residues 169-180 (ETPTTPAAESAP). At threonine 170 the chain carries Phosphothreonine. 2 positions are modified to phosphoserine: serine 246 and serine 358. A Phosphotyrosine modification is found at tyrosine 892. Serine 896 is subject to Phosphoserine. The tract at residues 903 to 1123 (GAKSKAPSVS…TFLGEVASGD (221 aa)) is disordered. The span at 944–954 (PPPTGRPPAPP) shows a compositional bias: pro residues. The short motif at 950–955 (PPAPPR) is the SH3-binding element. Over residues 957–971 (ASREEPLTPRLKAEG) the composition is skewed to basic and acidic residues. Threonine 964 carries the phosphothreonine modification. The short motif at 989-992 (NPAY) is the NPXY motif element. Tyrosine 992 carries the phosphotyrosine modification. 3 stretches are compositionally biased toward pro residues: residues 1002-1017 (LLPP…PVPP), 1054-1065 (LPPPDFPPPPLP), and 1093-1110 (GPPP…PGPS). Serine 1137 carries the post-translational modification Phosphoserine. The tract at residues 1140–1178 (DYAPAGPGRSVLLPGPLELQPPRGLPSDYGRPLSFPPPR) is disordered. Tyrosine 1141 and tyrosine 1168 each carry phosphotyrosine. Residues 1210–1264 (WLRAIGLERYEEGLVHNGWDDLEFLSDITEEDLEEAGVQDPAHKRLLLDTLQLSK) form the SAM domain. Phosphoserine is present on serine 1263.

It belongs to the inositol 1,4,5-trisphosphate 5-phosphatase family. Interacts with tyrosine phosphorylated form of SHC1. Interacts with EGFR. Upon stimulation by the EGF signaling pathway, it forms a complex with SHC1 and EGFR. Interacts with cytoskeletal protein SORBS3/vinexin, promoting its localization to the periphery of cells. Forms a complex with filamin (FLNA or FLNB), actin, GPIb (GP1BA or GP1BB) that regulates cortical and submembraneous actin. Interacts with c-Met/MET, when c-Met/MET is phosphorylated on 'Tyr-1356'. Interacts with p130Cas/BCAR1. Interacts with CENTD3/ARAP3 via its SAM domain. Interacts with c-Cbl/CBL and CAP/SORBS1. Interacts with activated EPHA2 receptor. Interacts with receptor FCGR2A. Interacts with receptor FCGR2B. Interacts with tyrosine kinase ABL1. Interacts with tyrosine kinase TEC. Interacts with CSF1R. Interacts (via N-terminus) with SH3YL1 (via SH3 domain). Interacts with FCRL6 (tyrosine phosphorylated form). Interacts (via SH2 domain) with tyrosine phosphorylated KLRC1 (via ITIM). Interacts with NEDD9/HEF1. Post-translationally, tyrosine phosphorylated by the members of the SRC family after exposure to a diverse array of extracellular stimuli such as insulin, growth factors such as EGF or PDGF, chemokines, integrin ligands and hypertonic and oxidative stress. May be phosphorylated upon IgG receptor FCGR2B-binding. Phosphorylated at Tyr-992 following cell attachment and spreading. Phosphorylated at Tyr-1168 following EGF signaling pathway stimulation. Phosphorylated at Thr-964 in response to PDGF.

Its subcellular location is the cytoplasm. It is found in the cytosol. It localises to the membrane. The protein localises to the cell projection. The protein resides in the filopodium. Its subcellular location is the lamellipodium. It is found in the basal cell membrane. It localises to the nucleus. The protein localises to the nucleus speckle. The protein resides in the cytoskeleton. Its subcellular location is the spindle pole. It carries out the reaction a 1,2-diacyl-sn-glycero-3-phospho-(1D-myo-inositol-3,4,5-trisphosphate) + H2O = a 1,2-diacyl-sn-glycero-3-phospho-(1D-myo-inositol-3,4-bisphosphate) + phosphate. The catalysed reaction is 1,2-dioctanoyl-sn-glycero-3-phospho-(1D-myo-inositol-3,4,5-trisphosphate) + H2O = 1,2-dioctanoyl-sn-glycero-3-phospho-(1D-myo-inositol-3,4-bisphosphate) + phosphate. The enzyme catalyses 1,2-dihexadecanoyl-sn-glycero-3-phospho-(1D-myo-inositol-3,4,5-trisphosphate) + H2O = 1,2-dihexadecanoyl-sn-glycero-3-phospho-(1D-myo-inositol-3,4-bisphosphate) + phosphate. Activated upon translocation to the sites of synthesis of PtdIns(3,4,5)P3 in the membrane. Enzymatic activity is enhanced in the presence of phosphatidylserine. In terms of biological role, phosphatidylinositol (PtdIns) phosphatase that specifically hydrolyzes the 5-phosphate of phosphatidylinositol-3,4,5-trisphosphate (PtdIns(3,4,5)P3) to produce PtdIns(3,4)P2, thereby negatively regulating the PI3K (phosphoinositide 3-kinase) pathways. Required for correct mitotic spindle orientation and therefore progression of mitosis. Plays a central role in regulation of PI3K-dependent insulin signaling, although the precise molecular mechanisms and signaling pathways remain unclear. While overexpression reduces both insulin-stimulated MAP kinase and Akt activation, its absence does not affect insulin signaling or GLUT4 trafficking. Confers resistance to dietary obesity. May act by regulating AKT2, but not AKT1, phosphorylation at the plasma membrane. Part of a signaling pathway that regulates actin cytoskeleton remodeling. Required for the maintenance and dynamic remodeling of actin structures as well as in endocytosis, having a major impact on ligand-induced EGFR internalization and degradation. Participates in regulation of cortical and submembraneous actin by hydrolyzing PtdIns(3,4,5)P3 thereby regulating membrane ruffling. Regulates cell adhesion and cell spreading. Required for HGF-mediated lamellipodium formation, cell scattering and spreading. Acts as a negative regulator of EPHA2 receptor endocytosis by inhibiting via PI3K-dependent Rac1 activation. Acts as a regulator of neuritogenesis by regulating PtdIns(3,4,5)P3 level and is required to form an initial protrusive pattern, and later, maintain proper neurite outgrowth. Acts as a negative regulator of the FC-gamma-RIIA receptor (FCGR2A). Mediates signaling from the FC-gamma-RIIB receptor (FCGR2B), playing a central role in terminating signal transduction from activating immune/hematopoietic cell receptor systems. Involved in EGF signaling pathway. Upon stimulation by EGF, it is recruited by EGFR and dephosphorylates PtdIns(3,4,5)P3. Plays a negative role in regulating the PI3K-PKB pathway, possibly by inhibiting PKB activity. Down-regulates Fc-gamma-R-mediated phagocytosis in macrophages independently of INPP5D/SHIP1. In macrophages, down-regulates NF-kappa-B-dependent gene transcription by regulating macrophage colony-stimulating factor (M-CSF)-induced signaling. Plays a role in the localization of AURKA and NEDD9/HEF1 to the basolateral membrane at interphase in polarized cysts, thereby mediates cell cycle homeostasis, cell polarization and cilia assembly. Additionally promotion of cilia growth is also facilitated by hydrolysis of (PtdIns(3,4,5)P3) to PtdIns(3,4)P2. Promotes formation of apical membrane-initiation sites during the initial stages of lumen formation via Rho family-induced actin filament organization and CTNNB1 localization to cell-cell contacts. May also hydrolyze PtdIns(1,3,4,5)P4, and could thus affect the levels of the higher inositol polyphosphates like InsP6. Involved in endochondral ossification. The polypeptide is Phosphatidylinositol 3,4,5-trisphosphate 5-phosphatase 2 (Canis lupus familiaris (Dog)).